Reading from the N-terminus, the 273-residue chain is SPbeta prophage-derived uncharacterized protein YomF (273 aa).

Positions valine 119–lysine 149 form a coiled coil.

In Bacillus subtilis (strain 168), this protein is SPbeta prophage-derived uncharacterized protein YomF (yomF).